The chain runs to 804 residues: DNA mismatch repair protein MutS (804 aa).

614 to 621 (GPNMAGKS) is a binding site for ATP.

This sequence belongs to the DNA mismatch repair MutS family.

In terms of biological role, this protein is involved in the repair of mismatches in DNA. It is possible that it carries out the mismatch recognition step. This protein has a weak ATPase activity. This Ehrlichia ruminantium (strain Gardel) protein is DNA mismatch repair protein MutS.